A 126-amino-acid chain; its full sequence is MLRTMLQGKLHRVKVTQADLHYEGSCAIDQDFMDAAGILENEAIDIYNVDNGERFSTYAICAERGSGIISVNGAAARRAAVGDRLIICSYVQIPDSDARSHKPNIAYFEGDNEMKRIAKAVPVQVA.

Ser-25 serves as the catalytic Schiff-base intermediate with substrate; via pyruvic acid. Ser-25 is subject to Pyruvic acid (Ser). Substrate is bound at residue Thr-57. Tyr-58 (proton donor) is an active-site residue. Gly-73–Ala-75 contributes to the substrate binding site.

This sequence belongs to the PanD family. As to quaternary structure, heterooctamer of four alpha and four beta subunits. Requires pyruvate as cofactor. Is synthesized initially as an inactive proenzyme, which is activated by self-cleavage at a specific serine bond to produce a beta-subunit with a hydroxyl group at its C-terminus and an alpha-subunit with a pyruvoyl group at its N-terminus.

The protein localises to the cytoplasm. It catalyses the reaction L-aspartate + H(+) = beta-alanine + CO2. The protein operates within cofactor biosynthesis; (R)-pantothenate biosynthesis; beta-alanine from L-aspartate: step 1/1. In terms of biological role, catalyzes the pyruvoyl-dependent decarboxylation of aspartate to produce beta-alanine. The chain is Aspartate 1-decarboxylase from Proteus mirabilis (strain HI4320).